The primary structure comprises 320 residues: Aminoacyl tRNA synthase complex-interacting multifunctional protein 2 (320 aa).

Residues 31–52 are disordered; the sequence is HSKTTSPATDAGHVQETSEPSL. At S36 the chain carries Phosphoserine. Residues 82–162 are interaction with PRKN; sequence TPDADLDVTN…HTHSSVKNVP (81 aa). Residues 162 to 225 are interaction with TP53; sequence PENLLKCFGE…FLFSLFGQKH (64 aa). One can recognise a GST C-terminal domain in the interval 220 to 317; the sequence is LFGQKHSAVN…NLVPFSTALQ (98 aa).

As to quaternary structure, part of the multisynthetase complex (MSC), a multisubunit complex that groups tRNA ligases for Arg (RARS1), Asp (DARS1), Gln (QARS1), Ile (IARS1), Leu (LARS1), Lys (KARS1), Met (MARS1) the bifunctional ligase for Glu and Pro (EPRS1) and the auxiliary subunits AIMP1/p43, AIMP2/p38 and EEF1E1/p18. Interacts (via N-terminus) with KARS1. Interacts with EPRS1. Forms a linear complex that contains MARS1, EEF1E1, EPRS1 and AIMP2 that is at the core of the multisubunit complex. Binds FUBP1 (via C-terminus). Interacts in both its unphosphorylated and phosphorylated forms with p53/TP53 (via N-terminus) in the nucleus following UV irradiation. Interacts (via N-terminus) with PRKN/parkin (via first RING-type domain). Interacts with TARS3. Post-translationally, phosphorylated on serine residues in response to UV irradiation. In terms of processing, ubiquitinated by PRKN, leading to its degradation by the proteasome.

Its subcellular location is the cytoplasm. It localises to the cytosol. The protein resides in the nucleus. In terms of biological role, required for assembly and stability of the aminoacyl-tRNA synthase complex. Mediates ubiquitination and degradation of FUBP1, a transcriptional activator of MYC, leading to MYC down-regulation which is required for aveolar type II cell differentiation. Blocks MDM2-mediated ubiquitination and degradation of p53/TP53. Functions as a proapoptotic factor. The sequence is that of Aminoacyl tRNA synthase complex-interacting multifunctional protein 2 (AIMP2) from Cricetulus griseus (Chinese hamster).